A 397-amino-acid polypeptide reads, in one-letter code: Acetate kinase (397 aa).

Asn8 lines the Mg(2+) pocket. Lys15 provides a ligand contact to ATP. Arg89 provides a ligand contact to substrate. Catalysis depends on Asp146, which acts as the Proton donor/acceptor. ATP is bound by residues 206-210, 281-283, and 329-333; these read HLGNG, DLR, and GVGEN. Glu382 contacts Mg(2+).

It belongs to the acetokinase family. In terms of assembly, homodimer. Mg(2+) serves as cofactor. Requires Mn(2+) as cofactor.

Its subcellular location is the cytoplasm. The enzyme catalyses acetate + ATP = acetyl phosphate + ADP. Its pathway is metabolic intermediate biosynthesis; acetyl-CoA biosynthesis; acetyl-CoA from acetate: step 1/2. Its function is as follows. Catalyzes the formation of acetyl phosphate from acetate and ATP. Can also catalyze the reverse reaction. In Bacillus thuringiensis subsp. konkukian (strain 97-27), this protein is Acetate kinase.